Here is a 647-residue protein sequence, read N- to C-terminus: DNA mismatch repair protein MutL (647 aa).

Disordered regions lie at residues 356–391 (EGSQ…SSIS) and 407–428 (PRPQ…EALP). The span at 413-423 (LRPQYQGSVTS) shows a compositional bias: polar residues.

It belongs to the DNA mismatch repair MutL/HexB family.

Functionally, this protein is involved in the repair of mismatches in DNA. It is required for dam-dependent methyl-directed DNA mismatch repair. May act as a 'molecular matchmaker', a protein that promotes the formation of a stable complex between two or more DNA-binding proteins in an ATP-dependent manner without itself being part of a final effector complex. This is DNA mismatch repair protein MutL from Citrifermentans bemidjiense (strain ATCC BAA-1014 / DSM 16622 / JCM 12645 / Bem) (Geobacter bemidjiensis).